Reading from the N-terminus, the 664-residue chain is Intraflagellar transport protein 70B (664 aa).

TPR repeat units lie at residues 11–44 (DGEF…SPRS), 45–78 (RAGL…HPEL), 153–186 (LDGQ…SGYR), 188–220 (DLSY…GIRQ), 385–418 (LTEQ…YEDT), 423–456 (IPVL…CNDH), and 458–491 (VWKL…HYDN). Residues 509-532 (MISQNEEAEELMRKIGKEEEQLSY) adopt a coiled-coil conformation. Residues 543 to 576 (CIVNLVIGTLYCAKGNYDFGISRVIKSLEPCNKK) form a TPR 8 repeat.

It belongs to the TTC30/dfy-1/fleer family. As to quaternary structure, interacts with the IFT B complex components IFT27, IFT46, IFT74, IFT52, IFT57, IFT80, IFT81 and IFT88. Interacts with KIF17.

Its subcellular location is the cell projection. The protein resides in the cilium. Required for polyglutamylation of axonemal tubulin. Plays a role in anterograde intraflagellar transport (IFT), the process by which cilia precursors are transported from the base of the cilium to the site of their incorporation at the tip. The chain is Intraflagellar transport protein 70B (IFT70B) from Bos taurus (Bovine).